Reading from the N-terminus, the 284-residue chain is Polyamine aminopropyltransferase (284 aa).

Residues 4-238 (EVWNTERLHD…GPMALGWGSH (235 aa)) enclose the PABS domain. Glutamine 33 is an S-methyl-5'-thioadenosine binding site. Residues histidine 64 and aspartate 88 each coordinate spermidine. Residues glutamate 108 and 140–141 (DG) each bind S-methyl-5'-thioadenosine. Aspartate 158 functions as the Proton acceptor in the catalytic mechanism. 158-161 (DSTD) contributes to the spermidine binding site. Proline 165 provides a ligand contact to S-methyl-5'-thioadenosine.

The protein belongs to the spermidine/spermine synthase family. In terms of assembly, homodimer or homotetramer.

Its subcellular location is the cytoplasm. It carries out the reaction S-adenosyl 3-(methylsulfanyl)propylamine + putrescine = S-methyl-5'-thioadenosine + spermidine + H(+). Its pathway is amine and polyamine biosynthesis; spermidine biosynthesis; spermidine from putrescine: step 1/1. In terms of biological role, catalyzes the irreversible transfer of a propylamine group from the amino donor S-adenosylmethioninamine (decarboxy-AdoMet) to putrescine (1,4-diaminobutane) to yield spermidine. The polypeptide is Polyamine aminopropyltransferase (Ruegeria sp. (strain TM1040) (Silicibacter sp.)).